We begin with the raw amino-acid sequence, 354 residues long: UPF0597 protein PPA0217 (354 aa).

Belongs to the UPF0597 family.

The sequence is that of UPF0597 protein PPA0217 from Cutibacterium acnes (strain DSM 16379 / KPA171202) (Propionibacterium acnes).